We begin with the raw amino-acid sequence, 382 residues long: Alanine racemase 1 (382 aa).

Residue K39 is the Proton acceptor; specific for D-alanine of the active site. K39 carries the post-translational modification N6-(pyridoxal phosphate)lysine. Substrate is bound at residue R138. The active-site Proton acceptor; specific for L-alanine is the Y265. M312 provides a ligand contact to substrate.

The protein belongs to the alanine racemase family. It depends on pyridoxal 5'-phosphate as a cofactor.

The enzyme catalyses L-alanine = D-alanine. Its pathway is amino-acid biosynthesis; D-alanine biosynthesis; D-alanine from L-alanine: step 1/1. Catalyzes the interconversion of L-alanine and D-alanine. May also act on other amino acids. In Staphylococcus aureus (strain NCTC 8325 / PS 47), this protein is Alanine racemase 1 (alr1).